The chain runs to 705 residues: MARDYPLDRYRNFGIMAHIDAGKTTCSERILYYTGKSHNIGEVHDGAATMDWMEQEQERGITITSAATTTFWERTEDGETADTPKHRLNIIDTPGHVDFTIEVERSLAVLDGAVCVLDANAGVEPQTETVWRQADRYKVPRIVFVNKMDKIGADFFNCVHMIEDRTGARAVPVAIPIGSENELEGLVDLVTMQEWVYKGDDLGASWVKGEIRDSLKDVCEEWRGKMIEAAVEEDDDAMMEYLEGNEPDVPTLRALLRKGTLALHFVPVLGGSAFKNKGVQPLLNAVIDYLPSPLDVVDYMGFAPGDENEERNIPRRADDDMPFSGLAFKIMNDPFVGSLTFTRIYSGTMNKGDTVLNSTKGKKERIGRMMMMHSNNREEIEEAFAGDIIALAGLKDTTTGDTLCDVKEPVVLETMTFPDPVIEIAVEPKTKNDQEKMSQGLARLAAEDPSFRVETDIESGQTIMKGMGELHLDILVDRLKREFKVEANIGAPQVAYRETIGHEVEHTYTHKKQSGGSGQFAEVKLVISPTEPGEGYSFESKIVGGAVPKEYIPGVEKGIKSVMDSGPLAGFPVIDFKVALVDGKFHDVDSSVLAFEIAARMGMREGMKKAGAKLLEPVMKVEVVTPEEYTGGIIGDLTSRRGQVTGQEPRGNAVAINAFVPLANMFGYINTLRSMSSGRAQFTMQFDHYDPVPANISQEIQEKFA.

The 287-residue stretch at aspartate 8–leucine 294 folds into the tr-type G domain. GTP is bound by residues alanine 17–threonine 24, aspartate 92–histidine 96, and asparagine 146–aspartate 149.

This sequence belongs to the TRAFAC class translation factor GTPase superfamily. Classic translation factor GTPase family. EF-G/EF-2 subfamily.

It is found in the cytoplasm. Its function is as follows. Catalyzes the GTP-dependent ribosomal translocation step during translation elongation. During this step, the ribosome changes from the pre-translocational (PRE) to the post-translocational (POST) state as the newly formed A-site-bound peptidyl-tRNA and P-site-bound deacylated tRNA move to the P and E sites, respectively. Catalyzes the coordinated movement of the two tRNA molecules, the mRNA and conformational changes in the ribosome. The protein is Elongation factor G of Dinoroseobacter shibae (strain DSM 16493 / NCIMB 14021 / DFL 12).